Consider the following 202-residue polypeptide: Glycerol-3-phosphate acyltransferase (202 aa).

5 consecutive transmembrane segments (helical) span residues 6 to 26 (LTLG…AVLV), 56 to 76 (SAAL…YIAF), 82 to 102 (SVSL…PIFF), 118 to 138 (APIG…MVLI), and 141 to 161 (YSSL…WYLD).

Belongs to the PlsY family. In terms of assembly, probably interacts with PlsX.

The protein resides in the cell inner membrane. The catalysed reaction is an acyl phosphate + sn-glycerol 3-phosphate = a 1-acyl-sn-glycero-3-phosphate + phosphate. It functions in the pathway lipid metabolism; phospholipid metabolism. Catalyzes the transfer of an acyl group from acyl-phosphate (acyl-PO(4)) to glycerol-3-phosphate (G3P) to form lysophosphatidic acid (LPA). This enzyme utilizes acyl-phosphate as fatty acyl donor, but not acyl-CoA or acyl-ACP. This Shewanella woodyi (strain ATCC 51908 / MS32) protein is Glycerol-3-phosphate acyltransferase.